Reading from the N-terminus, the 156-residue chain is Small ribosomal subunit protein uS7 (156 aa).

This sequence belongs to the universal ribosomal protein uS7 family. Part of the 30S ribosomal subunit. Contacts proteins S9 and S11.

Functionally, one of the primary rRNA binding proteins, it binds directly to 16S rRNA where it nucleates assembly of the head domain of the 30S subunit. Is located at the subunit interface close to the decoding center, probably blocks exit of the E-site tRNA. This chain is Small ribosomal subunit protein uS7, found in Psychromonas ingrahamii (strain DSM 17664 / CCUG 51855 / 37).